A 476-amino-acid chain; its full sequence is Hydrogenase-4 component F homolog (476 aa).

A run of 12 helical transmembrane segments spans residues 1–21, 25–45, 54–74, 120–140, 153–173, 202–222, 235–255, 270–290, 307–327, 368–388, 402–422, and 442–462; these read MSAA…SQIS, ISSW…LFLL, FFLV…IGFT, IGLM…MVGI, YFIL…LFYI, LVNI…GLFP, PTPI…YAIL, AGPL…LMFY, MGII…AGLL, LGWG…MGVF, SPLL…ALIL, and LYLP…YIPP.

The protein belongs to the complex I subunit 5 family.

It localises to the cell inner membrane. The polypeptide is Hydrogenase-4 component F homolog (hyfF) (Methylacidiphilum infernorum (isolate V4) (Methylokorus infernorum (strain V4))).